The following is a 357-amino-acid chain: Holliday junction branch migration complex subunit RuvB (357 aa).

The segment covering 1–15 (MAIQSDSLSSLPDSP) has biased composition (low complexity). The segment at 1 to 30 (MAIQSDSLSSLPDSPRIVAPQPVSPNEESI) is disordered. Positions 13 to 195 (DSPRIVAPQP…FGIVSRLEFY (183 aa)) are large ATPase domain (RuvB-L). Residues L34, R35, G76, K79, T80, T81, 142–144 (EDF), R185, Y195, and R232 each bind ATP. Residue T80 participates in Mg(2+) binding. A small ATPAse domain (RuvB-S) region spans residues 196–266 (NTDELARIVT…AAGRALAMLD (71 aa)). Residues 269–357 (PQGLDVMDRK…SGGTGELFSK (89 aa)) are head domain (RuvB-H). Residues R305, R324, and R329 each coordinate DNA.

The protein belongs to the RuvB family. As to quaternary structure, homohexamer. Forms an RuvA(8)-RuvB(12)-Holliday junction (HJ) complex. HJ DNA is sandwiched between 2 RuvA tetramers; dsDNA enters through RuvA and exits via RuvB. An RuvB hexamer assembles on each DNA strand where it exits the tetramer. Each RuvB hexamer is contacted by two RuvA subunits (via domain III) on 2 adjacent RuvB subunits; this complex drives branch migration. In the full resolvosome a probable DNA-RuvA(4)-RuvB(12)-RuvC(2) complex forms which resolves the HJ.

The protein localises to the cytoplasm. It carries out the reaction ATP + H2O = ADP + phosphate + H(+). The RuvA-RuvB-RuvC complex processes Holliday junction (HJ) DNA during genetic recombination and DNA repair, while the RuvA-RuvB complex plays an important role in the rescue of blocked DNA replication forks via replication fork reversal (RFR). RuvA specifically binds to HJ cruciform DNA, conferring on it an open structure. The RuvB hexamer acts as an ATP-dependent pump, pulling dsDNA into and through the RuvAB complex. RuvB forms 2 homohexamers on either side of HJ DNA bound by 1 or 2 RuvA tetramers; 4 subunits per hexamer contact DNA at a time. Coordinated motions by a converter formed by DNA-disengaged RuvB subunits stimulates ATP hydrolysis and nucleotide exchange. Immobilization of the converter enables RuvB to convert the ATP-contained energy into a lever motion, pulling 2 nucleotides of DNA out of the RuvA tetramer per ATP hydrolyzed, thus driving DNA branch migration. The RuvB motors rotate together with the DNA substrate, which together with the progressing nucleotide cycle form the mechanistic basis for DNA recombination by continuous HJ branch migration. Branch migration allows RuvC to scan DNA until it finds its consensus sequence, where it cleaves and resolves cruciform DNA. The chain is Holliday junction branch migration complex subunit RuvB from Bordetella pertussis (strain Tohama I / ATCC BAA-589 / NCTC 13251).